The sequence spans 78 residues: uncharacterized protein (78 aa).

This is an uncharacterized protein from Treponema pallidum (strain Nichols).